The following is a 90-amino-acid chain: Small ribosomal subunit protein bS18 (90 aa).

The disordered stretch occupies residues 1-24 (MKPMRQKPGRGQGNKSISNALASK).

It belongs to the bacterial ribosomal protein bS18 family. In terms of assembly, part of the 30S ribosomal subunit. Forms a tight heterodimer with protein bS6.

Its function is as follows. Binds as a heterodimer with protein bS6 to the central domain of the 16S rRNA, where it helps stabilize the platform of the 30S subunit. The chain is Small ribosomal subunit protein bS18 from Chlorobium phaeovibrioides (strain DSM 265 / 1930) (Prosthecochloris vibrioformis (strain DSM 265)).